The chain runs to 117 residues: Ig heavy chain V region 1-72 (117 aa).

The first 19 residues, 1-19 (MGWSCIMLFLAATATGVHS), serve as a signal peptide directing secretion. The segment at 20–49 (QVQLQQPGAELVKPGASVKLSCKASGYTFT) is framework-1. A disulfide bond links Cys-41 and Cys-115. A complementarity-determining-1 region spans residues 50–54 (SYWMH). The segment at 55-68 (WVKQRPGRGLEWIG) is framework-2. Residues 69–85 (RIDPNSGGTKYNEKFKS) are complementarity-determining-2. The tract at residues 86 to 117 (KATLTVDKPSSTAYMQLSSLTSEDSAVYYCAR) is framework-3.

The polypeptide is Ig heavy chain V region 1-72 (Mus musculus (Mouse)).